The sequence spans 92 residues: Acylphosphatase (92 aa).

Cysteine 5 and cysteine 49 are oxidised to a cystine. The Acylphosphatase-like domain maps to 5-92 (CIIAWIYGRV…SGELTDFRIR (88 aa)). Catalysis depends on residues arginine 20 and asparagine 38.

Belongs to the acylphosphatase family.

The catalysed reaction is an acyl phosphate + H2O = a carboxylate + phosphate + H(+). The polypeptide is Acylphosphatase (Shigella boydii serotype 4 (strain Sb227)).